The sequence spans 310 residues: MSVDSVYKYIVFDVIRNIKSNIKNDSDTENVDESIIDEIQTMWLDRLTQTGAISNQNDPDETTATTTTTQPQSTLSTVEHENVRNTLNSLIQLNNKSQTTTTTTTSTFGNPQQYLPPQKEVSNGTSPTMNSSNGSNNNNNNNNSNNSSNSSNNNNLPSSLRSIMNPMPQNDGTLDESDNDDDNNNNNNDNDNENNKDNIDKLIIDGFKKNFNFNGDEVIPQNDGLNDDDDLDDEEIGGGGGKVEEDSLGSDLDDDDDDDPDPIIEHFVLCQYEKVSRIKNKRKCNFKDGIMHLNGKDTLFNKANGEMIWN.

Disordered regions lie at residues 52 to 78, 91 to 197, and 218 to 261; these read AISN…LSTV, IQLN…NNKD, and VIPQ…DDPD. 2 stretches are compositionally biased toward low complexity: residues 62–77 and 122–160; these read TTAT…TLST and SNGT…PSSL. 3 stretches are compositionally biased toward acidic residues: residues 173–183, 225–236, and 246–261; these read TLDESDNDDDN, LNDDDDLDDEEI, and DSLG…DDPD.

This sequence belongs to the TFIIA subunit 1 family. As to quaternary structure, TFIIA is a heterodimer of the large subunit 1 and a small subunit gamma.

The protein localises to the nucleus. In terms of biological role, TFIIA is a component of the transcription machinery of RNA polymerase II and plays an important role in transcriptional activation. TFIIA in a complex with tbp mediates transcriptional activity. This is Transcription initiation factor IIA subunit 1 (gtf2a1) from Dictyostelium discoideum (Social amoeba).